Here is a 196-residue protein sequence, read N- to C-terminus: Interleukin-18 (196 aa).

The propeptide occupies 1 to 29 (MSCEEIAVCAVRLRENLCLYFEELECDAF).

The protein belongs to the IL-1 family. In terms of assembly, forms a ternary complex with ligand-binding receptor subunit IL18R1 and signaling receptor subunit IL18RAP at the plasma membrane. Mature IL18 first binds to IL18R1 forming a low affinity binary complex, which then interacts with IL18RAP to form a high affinity ternary complex that signals inside the cell. Interacts with cargo receptor TMED10; the interaction mediates the translocation from the cytoplasm into the ERGIC (endoplasmic reticulum-Golgi intermediate compartment) and thereby secretion. Post-translationally, the pro-IL-18 precursor is processed by CASP1 or CASP4 to yield the active form.

It is found in the cytoplasm. The protein resides in the secreted. Functionally, augments natural killer cell activity in spleen cells and stimulates interferon gamma production in T-helper type I cells. Involved in transduction of inflammation downstream of pyroptosis: its mature form is specifically released in the extracellular milieu by passing through the gasdermin-D (GSDMD) pore. This chain is Interleukin-18 (IL18), found in Gallus gallus (Chicken).